The primary structure comprises 575 residues: Amino-acid acetyltransferase, mitochondrial (575 aa).

The N-terminal 35 residues, 1-35 (MSKLRNLNRQFISNLKTHETVTNAKRNLILSILKS), are a transit peptide targeting the mitochondrion. One can recognise an N-acetyltransferase domain in the interval 398-557 (FTLNNLVQDG…QGIPGGVNIH (160 aa)).

This sequence belongs to the acetyltransferase family.

The protein localises to the mitochondrion. The catalysed reaction is L-glutamate + acetyl-CoA = N-acetyl-L-glutamate + CoA + H(+). The protein operates within amino-acid biosynthesis; L-arginine biosynthesis; N(2)-acetyl-L-ornithine from L-glutamate: step 1/4. N-acetylglutamate synthase involved in arginine biosynthesis. This chain is Amino-acid acetyltransferase, mitochondrial (ARG2), found in Debaryomyces hansenii (strain ATCC 36239 / CBS 767 / BCRC 21394 / JCM 1990 / NBRC 0083 / IGC 2968) (Yeast).